We begin with the raw amino-acid sequence, 114 residues long: Lectin MVL (114 aa).

Residues 2–55 (ASYKVNIPAGPLWSNAEAQQVGPKIAAAHQGNFTGQWTTVVESAMSVVEVELQV) form repeat 1. A carbohydrate-binding positions include 12-16 (PLWSN), Gln-20, and 36-44 (GQWTTVVES). A linker region spans residues 56 to 60 (ENTGI). Repeat unit 2 spans residues 61 to 114 (HEFKTDVLAGPLWSNDEAQKLGPQIAASYGAEFTGQWRTIVEGVMSVIQIKYTF). A carbohydrate contacts are provided by residues 71 to 75 (PLWSN), Gln-79, and 95 to 103 (GQWRTIVEG).

As to quaternary structure, homodimer.

Its subcellular location is the cytoplasm. Carbohydrate-binding protein that binds oligomannosides such as Man(6)GlcNAc(2) with sub-micromolar affinities. The specificity of MVL is unique in that its minimal target comprises the Man-alpha-(1-&gt;6)-Man-beta-(1-&gt;4)-GlcNAc-beta-(1-&gt;4)-GlcNAc tetrasaccharide core (Man(2)A) found in N-linked oligomannosides. Displays hemagglutininating activity on rabbit, horse and hen erythrocytes. This activity is inhibited by yeast mannan. Does not bind mono- and disaccharides. Inhibits HIV-1 envelope-mediated cell fusion at nanomolar concentrations through carbohydrate-mediated interactions with high-mannose residues on the surface of the HIV envelope glycoprotein gp120. Its function is as follows. Unexpectedly for a lectin, one of the 2 oligomannose binding sites of MVL can catalyze the cleavage of chitin fragments (such as chitotriose, i.e. GlcNAc(3) or GlcNAc-beta-(1-&gt;4)-GlcNAcbeta-(1-&gt;4)-GlcNAc, and chitotetraose, i.e. GlcNAc(4)) to GlcNAc. This weak beta-1,4-glycosidase activity is restricted to the C-terminal carbohydrate-binding site. Does not cleave Man(3)GlcNAc(2) or the tetrasaccharide Man(2)A. This is Lectin MVL (mvl) from Microcystis viridis (Polycystis viridis).